Reading from the N-terminus, the 89-residue chain is Arminin 375 (89 aa).

A signal peptide spans 1–18 (MKAVFAILFLAFIALTYA). Positions 19-57 (KSYDEVKEEIKNEVEREIFEDLEEESDELDNYVEESNDA) are excised as a propeptide. Alanine amide is present on A86.

Belongs to the arminin family. As to expression, expressed in entodermal epithelium along the body column.

The protein resides in the secreted. It is found in the target cell membrane. Antimicrobial peptide with a broad-spectrum antimicrobial activity. Keeps its antibacterial activity under a wide range of salt concentrations that mimic physiological conditions of human blood, which is surprising, since Hydra is an obligate freshwater animal with nearly no salt tolerance. Does not affect red blood cells. This is Arminin 375 from Hydra oligactis (Brown hydra).